The primary structure comprises 389 residues: Transmembrane protease serine 11A (389 aa).

Residues 1–23 (MEVAGYGTHNRDLKQWMVTLLSA) are Cytoplasmic-facing. A helical; Signal-anchor for type II membrane protein membrane pass occupies residues 24-44 (LSLMMVVVTIGLLALFLVFDI). Residues 31–148 (VTIGLLALFL…SLVQVKDCGK (118 aa)) form the SEA domain. The Extracellular segment spans residues 45–389 (QVNSNSGQKS…RHWIASKTGL (345 aa)). Residues 158 to 388 (IVSGNPAAKG…YRHWIASKTG (231 aa)) enclose the Peptidase S1 domain. A disulfide bond links Cys-183 and Cys-199. Active-site charge relay system residues include His-198 and Asp-243. Asn-274 carries N-linked (GlcNAc...) asparagine glycosylation. 2 disulfide bridges follow: Cys-308-Cys-324 and Cys-335-Cys-364. Ser-339 (charge relay system) is an active-site residue.

Belongs to the peptidase S1 family.

It is found in the membrane. Functionally, probable serine protease which may play a role in cellular senescence. Overexpression inhibits cell growth and induce G1 cell cycle arrest. The chain is Transmembrane protease serine 11A (Tmprss11a) from Mus musculus (Mouse).